Consider the following 347-residue polypeptide: Probable arabinogalactan endo-beta-1,4-galactanase A (347 aa).

The first 16 residues, 1–16 (MLFSYLLATLPLLANA), serve as a signal peptide directing secretion. The active-site Proton donor is Glu150. Glu260 functions as the Nucleophile in the catalytic mechanism.

This sequence belongs to the glycosyl hydrolase 53 family.

The protein localises to the secreted. The catalysed reaction is The enzyme specifically hydrolyzes (1-&gt;4)-beta-D-galactosidic linkages in type I arabinogalactans.. Its function is as follows. Endogalactanase involved in the degradation of plant cell wall polysaccharides, and more particularly of hairy regions of pectin. The polypeptide is Probable arabinogalactan endo-beta-1,4-galactanase A (galA) (Aspergillus flavus (strain ATCC 200026 / FGSC A1120 / IAM 13836 / NRRL 3357 / JCM 12722 / SRRC 167)).